A 426-amino-acid polypeptide reads, in one-letter code: 3-phosphoshikimate 1-carboxyvinyltransferase (426 aa).

Residues Lys22, Ser23, and Arg27 each contribute to the 3-phosphoshikimate site. Residue Lys22 participates in phosphoenolpyruvate binding. Phosphoenolpyruvate contacts are provided by Gly96 and Arg124. 7 residues coordinate 3-phosphoshikimate: Ser170, Ser171, Gln172, Ser198, Asp314, Asn337, and Lys341. Position 172 (Gln172) interacts with phosphoenolpyruvate. Asp314 acts as the Proton acceptor in catalysis. Residues Arg345, Arg387, and Lys412 each contribute to the phosphoenolpyruvate site.

It belongs to the EPSP synthase family. Monomer.

The protein localises to the cytoplasm. It catalyses the reaction 3-phosphoshikimate + phosphoenolpyruvate = 5-O-(1-carboxyvinyl)-3-phosphoshikimate + phosphate. It functions in the pathway metabolic intermediate biosynthesis; chorismate biosynthesis; chorismate from D-erythrose 4-phosphate and phosphoenolpyruvate: step 6/7. Functionally, catalyzes the transfer of the enolpyruvyl moiety of phosphoenolpyruvate (PEP) to the 5-hydroxyl of shikimate-3-phosphate (S3P) to produce enolpyruvyl shikimate-3-phosphate and inorganic phosphate. This is 3-phosphoshikimate 1-carboxyvinyltransferase from Shewanella halifaxensis (strain HAW-EB4).